The sequence spans 998 residues: MKYATGTDNAMTSGISGQTNNSNSASNEMQPTTSTPTAVHKEATSTATTTATYANGNPNPSANPSQSQPSNALFCEQVTTVTNLFEKWNDCERTVVMYALLKRLRYPSLKFLQYSIDSNLTQNLGTSQTNLSSVVIDINANNPVYLQNLLNAYKTFQPCDLLDAMSSSSSDKDSMPCYGSDFQITTSAQCDERKLYARKEDILHEVLNMLPLLKPGNEEAKLIYLTLIPVAVKDTMQQIVPTELVQQIFSYLLIHPAITSEDRRSLNIWLRHLEDHIQAAAAGLTNRSYFLQPSPQLVAGGSSTGSGSCSSSATSSSTASCSSVASSSLCPASGSRSSRTNDWQTIAPPSKQLQNKLAGDWRGSGGGSSSGSINPLCDNLNGITLNELASSQNSLGLSLEGSSSLVNGVVAGAGSMLGIGGGDDHDTSFSKNGTEILDFDPVTADMGEACSLASSSLCGRNGGNTVEDRSQPPPNLQQQLLQPPPYASILMGNVGDQFGEINRWSLDSKIAALKTRRSNSLTTQTISSCSSSSNSSVITVNDNCSNSTENLAQFANKPRSFSLSIEHQRGALMNSGSDTRLDEFKPNYIKFHTRNVGMSGIGLWLKSLRLHKYIELFKNMTYEEMLLITEDFLQSVGVTKGASHKLALCIDKLKERANILNRVEQELLTGQMELSTAVEELTNIVLTPMKPLESPGPPEENIGLRFLKVIDIVTNTLQQDPYAVQDDETLGVLMWILDRSIHNEAFMNHASQLKDLKFKLSKMKISMVPKMHHVKPAGVGPNNGNINKPRWNGKTRKCDTKSGSNDRINNRKNSNDMLNFSLNCLPHPLPHHSQQAPPPLPQFDYNGYGGGPSHQPQYKSSSYPSFMGNPQQQPPPPPSSKSHHHPQQMQQMLQQHNHFPALPQQTPPQSHRRSLNNLILVAGGPQQPQQLIFKPGQGVLTNNGSNDNLGLERNQQPQQQQQRKLSGGVSSAEQQPKKTMAAVVMENLAKFDQHFTLF.

Over residues Met-1–Thr-37 the composition is skewed to polar residues. Disordered stretches follow at residues Met-1–Ser-45, Thr-50–Pro-69, and Leu-329–Ser-370. Positions Leu-329–Ser-338 are enriched in low complexity. Phosphoserine is present on residues Ser-564 and Ser-575. The interval Glu-583–Met-763 is interaction with cup. Residues Gly-600 to Lys-654 form the SAM domain. Disordered stretches follow at residues His-773–Met-892 and Asn-942–Lys-977. Composition is skewed to polar residues over residues Lys-801–Leu-822 and His-854–Pro-864. Ser-971 is subject to Phosphoserine.

Belongs to the SMAUG family. In terms of assembly, interacts with oskar (osk). Binds to the 3'-UTR of nos. Interacts with cup, which in turn recruits eIF4-E, leading to an indirect interaction between smg and eIF4-E that prevents mRNA translation.

It is found in the cytoplasm. Its function is as follows. Translation regulator that binds to the 3'-UTR of specific mRNAs such as nanos (nos) and prevent their translation. Prevents translation of unlocalized nos in the bulk cytoplasm via the recruitment of cup. The sequence is that of Protein Smaug from Drosophila simulans (Fruit fly).